A 213-amino-acid chain; its full sequence is Imidazole glycerol phosphate synthase subunit HisH (213 aa).

The Glutamine amidotransferase type-1 domain maps to 1–212 (MLAILDYKAG…HRYCTEAADA (212 aa)). Residue Cys79 is the Nucleophile of the active site. Active-site residues include His187 and Glu189.

Heterodimer of HisH and HisF.

The protein resides in the cytoplasm. The enzyme catalyses 5-[(5-phospho-1-deoxy-D-ribulos-1-ylimino)methylamino]-1-(5-phospho-beta-D-ribosyl)imidazole-4-carboxamide + L-glutamine = D-erythro-1-(imidazol-4-yl)glycerol 3-phosphate + 5-amino-1-(5-phospho-beta-D-ribosyl)imidazole-4-carboxamide + L-glutamate + H(+). It catalyses the reaction L-glutamine + H2O = L-glutamate + NH4(+). It functions in the pathway amino-acid biosynthesis; L-histidine biosynthesis; L-histidine from 5-phospho-alpha-D-ribose 1-diphosphate: step 5/9. Its function is as follows. IGPS catalyzes the conversion of PRFAR and glutamine to IGP, AICAR and glutamate. The HisH subunit catalyzes the hydrolysis of glutamine to glutamate and ammonia as part of the synthesis of IGP and AICAR. The resulting ammonia molecule is channeled to the active site of HisF. The chain is Imidazole glycerol phosphate synthase subunit HisH from Nitratidesulfovibrio vulgaris (strain ATCC 29579 / DSM 644 / CCUG 34227 / NCIMB 8303 / VKM B-1760 / Hildenborough) (Desulfovibrio vulgaris).